The sequence spans 241 residues: Ribonuclease PH (241 aa).

Phosphate-binding positions include arginine 89 and 127 to 129; that span reads GTR.

Belongs to the RNase PH family. As to quaternary structure, homohexameric ring arranged as a trimer of dimers.

The enzyme catalyses tRNA(n+1) + phosphate = tRNA(n) + a ribonucleoside 5'-diphosphate. Its function is as follows. Phosphorolytic 3'-5' exoribonuclease that plays an important role in tRNA 3'-end maturation. Removes nucleotide residues following the 3'-CCA terminus of tRNAs; can also add nucleotides to the ends of RNA molecules by using nucleoside diphosphates as substrates, but this may not be physiologically important. Probably plays a role in initiation of 16S rRNA degradation (leading to ribosome degradation) during starvation. The protein is Ribonuclease PH of Xanthomonas campestris pv. campestris (strain 8004).